The chain runs to 106 residues: Iron-sulfur cluster assembly protein CyaY (106 aa).

Belongs to the frataxin family.

Its function is as follows. Involved in iron-sulfur (Fe-S) cluster assembly. May act as a regulator of Fe-S biogenesis. The protein is Iron-sulfur cluster assembly protein CyaY of Escherichia coli O7:K1 (strain IAI39 / ExPEC).